Reading from the N-terminus, the 2546-residue chain is Formin-J (2546 aa).

Disordered stretches follow at residues 1–40 (MEENTNNIDNGHMGDNNNENNNNSNNNNNNNSNSSSSFVK), 61–108 (ENSN…PLSE), 188–270 (KNIT…PNSA), 369–414 (TTNN…SSSS), 502–541 (TNSFGSSTTTTISGGGSGSSSVNSSGGGSGTTPINVTPNS), 802–849 (SSIS…NTRK), 879–898 (TSVPTSPTSKNPLITSNNNN), 987–1101 (TTNN…GGIG), 1485–1529 (PKSK…ASLS), 1558–1601 (KRSK…FKSP), 1659–1775 (INNI…KVNS), 1840–1869 (VPTTTTSTTTTTQTTPPPVTINEKEKETQS), and 2014–2033 (SNLSRKSSKSSNNSSTSSLE). Low complexity-rich tracts occupy residues 16–37 (NNNENNNNSNNNNNNNSNSSSS) and 62–98 (NSNNSITSGGSSSNSGEISSNNNNNNNNNGILKNSTS). 2 stretches are compositionally biased toward polar residues: residues 99-108 (GSKDNTPLSE) and 188-198 (KNITPSKNNSP). 2 stretches are compositionally biased toward low complexity: residues 203-237 (NNNNNNNNNNNNNNNNNNNNNNNNNNNNNNNNNNN) and 247-270 (NKNSIYNTNSNNNSNTTNSTPNSA). Over residues 377 to 389 (AESLTTYSESSEI) the composition is skewed to polar residues. 2 stretches are compositionally biased toward low complexity: residues 390-414 (STDSTGVCSSSSSTSSTLSSKSSSS) and 502-513 (TNSFGSSTTTTI). The FHA domain occupies 391 to 444 (TDSTGVCSSSSSTSSTLSSKSSSSSSFNKFMEFLLIYIEDNDSTNGTWVNGNKL). Residues 457–963 (KITLSTPDFS…SSISNEQEYQ (507 aa)) enclose the GBD/FH3 domain. Composition is skewed to polar residues over residues 879 to 891 (TSVPTSPTSKNPL) and 992 to 1007 (SSAKNIEVDSSVNKSP). Residues 1033 to 1042 (VPPPPPPPPG) show a composition bias toward pro residues. Over residues 1043–1056 (GNNNNESDVPSSSG) the composition is skewed to low complexity. Residues 1057 to 1097 (GPPPPPPPPPPPGKSSGGGPPPPPPPPPKGGKGGPPPPPPI) are compositionally biased toward pro residues. The FH1 domain maps to 1072–1098 (SGGGPPPPPPPPPKGGKGGPPPPPPIG). In terms of domain architecture, FH2 spans 1106-1495 (KVKEEQPSVP…KSKKYQEQQN (390 aa)). The segment covering 1492 to 1502 (EQQNKPTQNND) has biased composition (polar residues). Positions 1507-1529 (SKLSNLPSSSSINDESSSSASLS) are enriched in low complexity. Positions 1563 to 1593 (EQEPVVEPIQITPKVGSAASAEPSPSIKSRD) constitute a DAD domain. Low complexity predominate over residues 1665 to 1679 (SSSSSSSSSSSSSSS). Basic and acidic residues predominate over residues 1687-1717 (HNTESEIKKEFISNSSMDKDKEKIKEKEKGT). Residues 1732 to 1745 (KSTTTSPSSSSSKK) are compositionally biased toward low complexity. Residues 1746–1757 (QIPSLSECLQES) are compositionally biased toward polar residues. Low complexity-rich tracts occupy residues 1763–1775 (RSSSYSPNSKVNS) and 1841–1853 (PTTTTSTTTTTQT). Residues 2067 to 2118 (IDDNQQKQQKQQQQQQQQQQQQQQLPQPQQQQQQQQQQQQQQQQQQQQQQQQ) are a coiled coil. The span at 2121–2154 (QQSTTTTTISTHHPQLKQVQPQSPSSLSQQPTQQ) shows a compositional bias: low complexity. 3 disordered regions span residues 2121 to 2369 (QQST…PKTV), 2381 to 2473 (SHKK…SYSS), and 2485 to 2510 (SPSSSITSCKPSPGAVSSTSSTLKTP). Residues 2160–2179 (QPSSPLQSHYKPQQKPQTTY) are compositionally biased toward polar residues. Low complexity-rich tracts occupy residues 2188–2206 (ANPFPSSTTSTNSSPSNAS) and 2237–2256 (SSASSNSSSVSGSSQSTPLS). Polar residues predominate over residues 2274 to 2287 (TPPSSSISNSTATT). Positions 2302-2315 (SPSSSSLEQSSNAS) are enriched in low complexity. The span at 2332-2342 (FKKHKKSHSKS) shows a compositional bias: basic residues. Low complexity-rich tracts occupy residues 2388 to 2439 (VDQS…SSSS), 2459 to 2473 (NISSGNISNNTSYSS), and 2485 to 2497 (SPSSSITSCKPSP). Over residues 2499–2508 (AVSSTSSTLK) the composition is skewed to polar residues.

The protein belongs to the formin homology family. Diaphanous subfamily. In terms of assembly, interacts (via GBD/FH3 domain) with activated Rho-GTPases.

In terms of biological role, formins play an important role in the nucleation of actin and the formation of linear actin filaments. The protein is Formin-J (forJ) of Dictyostelium discoideum (Social amoeba).